The primary structure comprises 310 residues: MSVTVKMLVDKVKLDVIYGDDDLLSKEITTSDISRPGLEMTGYFDYYSPERLQLLGMKEWSYLTKMTSHNRRHVLREMIKPETPAIIVARNLAIPEEMISAAKEKGIAILQSHVPTSRLSGEMSWYLDSCLAERTSVHGVLMDIYGMGVLIQGDSGIGKSETGLELVKRGHRLVADDRVDVFAKDEETLWGEPAEILRHLLEIRGVGIIDVMSLYGASAVKDSSQVQLAIYLENYESGKVFDRLGNGNEELELSGVKIPRLRIPVQTGRNMSVVIEAAAMNYRAKQMGFDATKTFEERLTQLITKNEGNQ.

Residues His-138 and Lys-159 contribute to the active site. An ATP-binding site is contributed by 153–160 (GDSGIGKS). A Mg(2+)-binding site is contributed by Ser-160. The active-site Proton acceptor; for phosphorylation activity. Proton donor; for dephosphorylation activity is Asp-177. The tract at residues 201 to 210 (LEIRGVGIID) is important for the catalytic mechanism of both phosphorylation and dephosphorylation. Position 202 (Glu-202) interacts with Mg(2+). Arg-243 is an active-site residue. The interval 264–269 (PVQTGR) is important for the catalytic mechanism of dephosphorylation.

It belongs to the HPrK/P family. Homohexamer. Mg(2+) is required as a cofactor. It depends on Mn(2+) as a cofactor.

It catalyses the reaction [HPr protein]-L-serine + ATP = [HPr protein]-O-phospho-L-serine + ADP + H(+). The catalysed reaction is [HPr protein]-O-phospho-L-serine + phosphate + H(+) = [HPr protein]-L-serine + diphosphate. With respect to regulation, kinase activity is inhibited by inorganic phosphate (Pi). In contrast to many other bacteria, neither kinase activity nor phosphorylase activity is affected by fructose 1,6-bisphosphate (FBP). Functionally, catalyzes the ATP- as well as probably the pyrophosphate-dependent phosphorylation of 'Ser-46' in HPr, a phosphocarrier protein of the phosphoenolpyruvate-dependent sugar phosphotransferase system (PTS). HprK/P also catalyzes the pyrophosphate-producing, inorganic phosphate-dependent dephosphorylation (phosphorolysis) of seryl-phosphorylated HPr (P-Ser-HPr). The two antagonistic activities of HprK/P are regulated by several intracellular metabolites, which change their concentration in response to the absence or presence of rapidly metabolisable carbon sources (glucose, fructose, etc.) in the growth medium. Therefore, by controlling the phosphorylation state of HPr, the HPrK/P is a sensor enzyme that plays a major role in the regulation of carbon metabolism and sugar transport: it probably mediates carbon catabolite repression (CCR), and regulates PTS-catalyzed carbohydrate uptake and inducer exclusion. In Streptococcus equinus (Streptococcus bovis), this protein is HPr kinase/phosphorylase (hprK).